The chain runs to 140 residues: Dehydratase ustZ (140 aa).

The region spanning 18–113 is the EthD domain; the sequence is PGISTEDYRN…GPDHEKFADT (96 aa).

The protein belongs to the tpcK family.

It carries out the reaction naphtopyrone YWA1 = norrubrofusarin + H2O + H(+). It functions in the pathway secondary metabolite biosynthesis. Dehydratase; part of the gene cluster that mediates the biosynthesis of ustilaginoidins, dimeric gamma-naphthopyrones isolated from different fungal species. The first step in the biosynthesis of ustilaginoidins is the production of gamma-naphthopyrone precursor YWA1 by the non-reducing polyketide synthase ustP, via condensation of one acetyl-CoA starter unit with 6 malonyl-CoA units. YWA1 is then probably substrate of the ustZ to yield norrubrofusarin via a dehydration reaction. A key enzyme in the biosynthetic pathway is the laccase ustL, which catalyzes the oxidative dimerization of norrubrofusarin to ustilaginoidin A. It can produce the M- and P-atropisomers in varying amounts, depending on the reaction conditions. For the biosynthesis of 3-methylustilaginoid in derivatives such as chaetochromin A, a methylated derivative of YWA1 is required. The C-methylation is considered to be catalyzed by ustM, the phosphopantetheine attachment site of which indicates that it acts on the growing polyketide chain before release of the product. For the biosynthesis of chaetochromin A, it is assumed that saturation of the D2 double bond takes place before dimerization, and is probably catalyzed by an external reductase because no candidate gene was identified within the cluster. In Ustilaginoidea virens (Rice false smut fungus), this protein is Dehydratase ustZ.